Reading from the N-terminus, the 84-residue chain is Acyl-CoA-binding protein (84 aa).

Residues 1 to 84 (MTTFEEAAQK…LYEQLATKYA (84 aa)) enclose the ACB domain. An acyl-CoA-binding positions include lysine 12, 27–31 (YGLYK), lysine 53, and tyrosine 72.

The protein belongs to the ACBP family. As to quaternary structure, interacts with dhkA.

In terms of biological role, binds to acyl-CoA. Processed into the SDF-2 (spore differentiation factor 2) a peptide which triggers sporulation. SDF-2 appears to stimulate prestalk cells to release additional SDF-2 by acting through a signal transduction pathway that also involves dhkA, regA and PKA. Induces encapsulation of prespore cells in a dhkA-dependent manner. GABA induces the release of acbA from prespore cells and induces the exposure of tagC on the surface of prestalk cells where it can convert acbA to SDF-2. Glutamate acts as a competitive inhibitor and is also able to inhibit induction of sporulation by SDF-2. In Dictyostelium discoideum (Social amoeba), this protein is Acyl-CoA-binding protein (acbA).